A 481-amino-acid chain; its full sequence is MDNSSSRRRFLQTLGLATGALAAGSFANAQEVAPLAPKKITIPDPNNIGPMTTWPPRKPGAIYMGGFRAPKLDKVRVAFVGVGERGSMHVGQMAVIEGAEIVGICDLYEDWAKRSADVVEKKTGKRPPIFTKGPEDYKRMMKEVKPDAVIVCPSWEWHCRVTCDVMKMGAHAFVEVPMAVSIKELWEIVDTSEETRKHCMMMENVNYGREELMYLNMVRQGVIGDLLYGEAAYIHELRGQMKQVERGTGSWRTYHYAKRNGNVYPTHGLGPIAQYMNLARKDDCFGRLVSFSSPALGRAAYAKKNFPADHKWNKLDFACGDMNTSIIKTTMGRTVLVEWDETSPRPYSRLNLIQGTLGTLAGFPTRVAGEKLGNGNYHEWIEGKEKLAPIFEKYDHPLWKRIGPLALKMGGHGGMDFVMLFRIIECLRNGEPMDQNVYEGAFWSSVSELSEYSVAQGGMPQVFPDFTRGDWKTTAPLGIVQ.

The segment at residues 1-29 (MDNSSSRRRFLQTLGLATGALAAGSFANA) is a signal peptide (tat-type signal). Residues 84–85 (ER), D106, 155–158 (WEWH), 175–176 (EV), and N204 each bind NAD(+). Substrate is bound by residues Y233, R252, 264–267 (YPTH), and Y347. Position 264 (Y264) interacts with NAD(+).

Belongs to the Gfo/Idh/MocA family. Glycosyl hydrolase 109 subfamily. NAD(+) is required as a cofactor. Predicted to be exported by the Tat system. The position of the signal peptide cleavage has not been experimentally proven.

Glycosidase. The polypeptide is Glycosyl hydrolase family 109 protein 1 (Akkermansia muciniphila (strain ATCC BAA-835 / DSM 22959 / JCM 33894 / BCRC 81048 / CCUG 64013 / CIP 107961 / Muc)).